A 185-amino-acid chain; its full sequence is MINDIQKTAEGKMQRSVEVLKENLAKVRTGRAHTGLLDQVEVEYWGSMVPVSQVANVTLLDARTIGVKPFEGNMAAKVEKAIRDSNLGLNPAAVGDLIRVPMPMLTEERRKDLIKVVRGEAEEGRVSIRNVRRDANDHIKKLLKDKEISEDEARRGEEAVQKLTDKYIAEADKVLAAKEEDLMAV.

It belongs to the RRF family.

The protein localises to the cytoplasm. Responsible for the release of ribosomes from messenger RNA at the termination of protein biosynthesis. May increase the efficiency of translation by recycling ribosomes from one round of translation to another. The protein is Ribosome-recycling factor of Neisseria gonorrhoeae (strain ATCC 700825 / FA 1090).